We begin with the raw amino-acid sequence, 201 residues long: FMN-dependent NADH:quinone oxidoreductase (201 aa).

FMN is bound by residues S10, 16–18 (SQS), 96–99 (MYNF), and 140–143 (SRGG).

Belongs to the azoreductase type 1 family. Homodimer. Requires FMN as cofactor.

The enzyme catalyses 2 a quinone + NADH + H(+) = 2 a 1,4-benzosemiquinone + NAD(+). The catalysed reaction is N,N-dimethyl-1,4-phenylenediamine + anthranilate + 2 NAD(+) = 2-(4-dimethylaminophenyl)diazenylbenzoate + 2 NADH + 2 H(+). Its function is as follows. Quinone reductase that provides resistance to thiol-specific stress caused by electrophilic quinones. Functionally, also exhibits azoreductase activity. Catalyzes the reductive cleavage of the azo bond in aromatic azo compounds to the corresponding amines. This chain is FMN-dependent NADH:quinone oxidoreductase, found in Yersinia pseudotuberculosis serotype O:1b (strain IP 31758).